We begin with the raw amino-acid sequence, 2138 residues long: Non-reducing polyketide synthase rads2 (2138 aa).

The segment at leucine 11–histidine 249 is N-terminal acylcarrier protein transacylase (SAT) domain. Residues serine 373–aspartate 804 form the Ketosynthase family 3 (KS3) domain. Residues cysteine 549, histidine 684, and histidine 724 each act as for beta-ketoacyl synthase activity in the active site. The interval valine 901–alanine 1184 is malonyl-CoA:ACP transacylase (MAT) domain. Serine 992 serves as the catalytic For acyl/malonyl transferase activity. The segment at alanine 1291–tryptophan 1437 is N-terminal hotdog fold. One can recognise a PKS/mFAS DH domain in the interval alanine 1291 to lysine 1610. Positions lysine 1303 to alanine 1607 are product template (PT) domain. The interval histidine 1459–lysine 1610 is C-terminal hotdog fold. The disordered stretch occupies residues serine 1618–valine 1666. The region spanning valine 1666–proline 1740 is the Carrier domain. The residue at position 1700 (serine 1700) is an O-(pantetheine 4'-phosphoryl)serine. Positions proline 1740–serine 1771 are enriched in low complexity. Disordered stretches follow at residues proline 1740–glutamate 1781 and glutamine 1807–alanine 1828. Positions alanine 1860–serine 2006 are thioesterase (TE) domain.

It functions in the pathway secondary metabolite biosynthesis. Functionally, non-reducing polyketide synthase; part of the gene cluster that mediates the biosynthesis of radicicol, a resorcylic acid lactone (RAL) that irreversibly inhibits the HSP90 molecular chaperone, an important target for cancer chemotherapy. The cluster encodes only two apparent post-PKS enzymes, a cytochrome P450 monooxygenase (radP) and a non-heme halogenase (radH) that introduce the epoxide and the chlorine, respectively. If this cluster includes all the genes required for radicicol biosynthesis, the remaining structural features of radicicol are presumably generated by the PKSs rads1 and rads2. The C-2' ketone could arise if the R-PKS rads1 and NR-PKS rads2 each carry out four iterations, in contrast to the five iteration-three iteration split for the hypothemycin PKSs. The origin of the cis 5',6' double bond is not known. The radicicol R-PKS rads1 ER domain may catalyze either double bond isomerization or reduction in the third iteration. In Floropilus chiversii (Chaetomium chiversii), this protein is Non-reducing polyketide synthase rads2.